Here is a 325-residue protein sequence, read N- to C-terminus: Chain length determinant protein (325 aa).

Residues 1 to 31 (MRVENNNVSGQNHDPEQIDLIDLLVQLWRGK) are Cytoplasmic-facing. A helical membrane pass occupies residues 32-52 (MTIIISVIVAIALAIGYLAVA). Residues 53–294 (KEKWTSTAIV…LPIRRDSPKK (242 aa)) are Periplasmic-facing. The helical transmembrane segment at 295 to 315 (AITLILAVLLGGMVGAGIVLG) threads the bilayer. Over 316–325 (RNALRNYNAK) the chain is Cytoplasmic.

The protein belongs to the WzzB/Cld/Rol family.

It localises to the cell inner membrane. Its pathway is bacterial outer membrane biogenesis; lipopolysaccharide biosynthesis. Confers a modal distribution of chain length on the O-antigen component of lipopolysaccharide (LPS). Gives rise to a reduced number of short chain molecules and increases in numbers of longer molecules. The polypeptide is Chain length determinant protein (wzzB) (Shigella dysenteriae).